Here is a 553-residue protein sequence, read N- to C-terminus: COP9 signalosome complex subunit 10 (553 aa).

The span at 21–46 (AEMEEDSDEMGVYEEETSQGAEEEVP) shows a compositional bias: acidic residues. The segment at 21–47 (AEMEEDSDEMGVYEEETSQGAEEEVPL) is disordered. The region spanning 298 to 474 (LRTHFSACLQ…DYVYFGDEPR (177 aa)) is the PCI domain.

In terms of assembly, component of a COP9 signalosome-like (CSN) complex.

Its subcellular location is the cytoplasm. The protein localises to the nucleus. Functionally, component of the COP9 signalosome (CSN) complex that acts as an regulator of the ubiquitin (Ubl) conjugation pathway by mediating the deneddylation of the cullin subunit of SCF-type E3 ubiquitin-protein ligase complexes. The CSN complex is involved in the regulation of the mating pheromone response. In Eremothecium gossypii (strain ATCC 10895 / CBS 109.51 / FGSC 9923 / NRRL Y-1056) (Yeast), this protein is COP9 signalosome complex subunit 10 (RRI2).